We begin with the raw amino-acid sequence, 102 residues long: NADH-quinone oxidoreductase subunit K (102 aa).

Helical transmembrane passes span 5 to 25 (LEHYLTVAAILFTLGIFGIFL), 31 to 51 (IVILMSIELMLLAVNINLVAF), and 66 to 86 (FVLTVAAAEAAIGLAILVVFF).

The protein belongs to the complex I subunit 4L family. As to quaternary structure, NDH-1 is composed of 14 different subunits. Subunits NuoA, H, J, K, L, M, N constitute the membrane sector of the complex.

It localises to the cell inner membrane. It catalyses the reaction a quinone + NADH + 5 H(+)(in) = a quinol + NAD(+) + 4 H(+)(out). NDH-1 shuttles electrons from NADH, via FMN and iron-sulfur (Fe-S) centers, to quinones in the respiratory chain. The immediate electron acceptor for the enzyme in this species is believed to be ubiquinone. Couples the redox reaction to proton translocation (for every two electrons transferred, four hydrogen ions are translocated across the cytoplasmic membrane), and thus conserves the redox energy in a proton gradient. This is NADH-quinone oxidoreductase subunit K from Parvibaculum lavamentivorans (strain DS-1 / DSM 13023 / NCIMB 13966).